The primary structure comprises 261 residues: MTHQTHAYHMVNPSPWPLTGALSALLMTSGLIMWFHFNSMYLLMLGLTTNTLTMYQWWRDIVRESTFQGHHTPIVQKGLRYGMILFIVSEVFFFAGFFWAFYHSSLAPTPELGGCWPPTGITPLNPMEVPLLNTSVLLASGVSITWAHHSLMEGNRKHMLQALFITISLGVYFTLLQASEYYETPFTISDGIYGSTFFMATGFHGLHVIIGSTFLIVCFMRQLKFHFTSNHHFGFEAAAWYWHFVDVVWLFLYVSIYWWGS.

Over 1 to 15 (MTHQTHAYHMVNPSP) the chain is Mitochondrial matrix. A helical membrane pass occupies residues 16 to 34 (WPLTGALSALLMTSGLIMW). At 35-40 (FHFNSM) the chain is on the mitochondrial intermembrane side. Residues 41–66 (YLLMLGLTTNTLTMYQWWRDIVREST) traverse the membrane as a helical segment. At 67 to 72 (FQGHHT) the chain is on the mitochondrial matrix side. The chain crosses the membrane as a helical span at residues 73–105 (PIVQKGLRYGMILFIVSEVFFFAGFFWAFYHSS). Over 106–128 (LAPTPELGGCWPPTGITPLNPME) the chain is Mitochondrial intermembrane. A helical membrane pass occupies residues 129-152 (VPLLNTSVLLASGVSITWAHHSLM). At 153 to 155 (EGN) the chain is on the mitochondrial matrix side. The chain crosses the membrane as a helical span at residues 156–183 (RKHMLQALFITISLGVYFTLLQASEYYE). The Mitochondrial intermembrane segment spans residues 184–190 (TPFTISD). Residues 191–223 (GIYGSTFFMATGFHGLHVIIGSTFLIVCFMRQL) form a helical membrane-spanning segment. Over 224 to 232 (KFHFTSNHH) the chain is Mitochondrial matrix. A helical transmembrane segment spans residues 233–256 (FGFEAAAWYWHFVDVVWLFLYVSI). Over 257–261 (YWWGS) the chain is Mitochondrial intermembrane.

This sequence belongs to the cytochrome c oxidase subunit 3 family. Component of the cytochrome c oxidase (complex IV, CIV), a multisubunit enzyme composed of 14 subunits. The complex is composed of a catalytic core of 3 subunits MT-CO1, MT-CO2 and MT-CO3, encoded in the mitochondrial DNA, and 11 supernumerary subunits COX4I, COX5A, COX5B, COX6A, COX6B, COX6C, COX7A, COX7B, COX7C, COX8 and NDUFA4, which are encoded in the nuclear genome. The complex exists as a monomer or a dimer and forms supercomplexes (SCs) in the inner mitochondrial membrane with NADH-ubiquinone oxidoreductase (complex I, CI) and ubiquinol-cytochrome c oxidoreductase (cytochrome b-c1 complex, complex III, CIII), resulting in different assemblies (supercomplex SCI(1)III(2)IV(1) and megacomplex MCI(2)III(2)IV(2)).

It is found in the mitochondrion inner membrane. It catalyses the reaction 4 Fe(II)-[cytochrome c] + O2 + 8 H(+)(in) = 4 Fe(III)-[cytochrome c] + 2 H2O + 4 H(+)(out). Component of the cytochrome c oxidase, the last enzyme in the mitochondrial electron transport chain which drives oxidative phosphorylation. The respiratory chain contains 3 multisubunit complexes succinate dehydrogenase (complex II, CII), ubiquinol-cytochrome c oxidoreductase (cytochrome b-c1 complex, complex III, CIII) and cytochrome c oxidase (complex IV, CIV), that cooperate to transfer electrons derived from NADH and succinate to molecular oxygen, creating an electrochemical gradient over the inner membrane that drives transmembrane transport and the ATP synthase. Cytochrome c oxidase is the component of the respiratory chain that catalyzes the reduction of oxygen to water. Electrons originating from reduced cytochrome c in the intermembrane space (IMS) are transferred via the dinuclear copper A center (CU(A)) of subunit 2 and heme A of subunit 1 to the active site in subunit 1, a binuclear center (BNC) formed by heme A3 and copper B (CU(B)). The BNC reduces molecular oxygen to 2 water molecules using 4 electrons from cytochrome c in the IMS and 4 protons from the mitochondrial matrix. The polypeptide is Cytochrome c oxidase subunit 3 (MT-CO3) (Halichoerus grypus (Gray seal)).